We begin with the raw amino-acid sequence, 151 residues long: Single-stranded DNA-binding protein, mitochondrial (151 aa).

The transit peptide at methionine 1–glutamine 16 directs the protein to the mitochondrion. An SSB domain is found at leucine 30–serine 141. Phosphoserine is present on residues serine 67 and serine 79. Residue lysine 113 is modified to N6-acetyllysine. Lysine 122 bears the N6-succinyllysine mark.

In terms of assembly, homotetramer. Interacts with MPG/AAG, through inhibition of its glycosylase activity it potentially prevents formation of DNA breaks in ssDNA, ensuring that base removal primarily occurs in dsDNA. Interacts with POLDIP2. Interacts with PRIMPOL.

The protein localises to the mitochondrion. It localises to the mitochondrion matrix. It is found in the mitochondrion nucleoid. Binds preferentially and cooperatively to pyrimidine rich single-stranded DNA (ss-DNA). In vitro, required to maintain the copy number of mitochondrial DNA (mtDNA) and plays a crucial role during mtDNA replication by stimulating the activity of the replisome components POLG and TWNK at the replication fork. Promotes the activity of the gamma complex polymerase POLG, largely by organizing the template DNA and eliminating secondary structures to favor ss-DNA conformations that facilitate POLG activity. In addition it is able to promote the 5'-3' unwinding activity of the mtDNA helicase TWNK. May also function in mtDNA repair. The sequence is that of Single-stranded DNA-binding protein, mitochondrial (Ssbp1) from Rattus norvegicus (Rat).